A 184-amino-acid polypeptide reads, in one-letter code: Putative NAD(P)H nitroreductase HI_1542 (184 aa).

Residues 10-12 (RKS), arginine 35, and histidine 39 each bind FMN. NAD(+) is bound at residue 122–127 (AAQAQG). Residue 132-134 (WIS) coordinates FMN.

The protein belongs to the nitroreductase family. Homodimer. Requires FMN as cofactor.

The polypeptide is Putative NAD(P)H nitroreductase HI_1542 (Haemophilus influenzae (strain ATCC 51907 / DSM 11121 / KW20 / Rd)).